A 179-amino-acid chain; its full sequence is Nucleoside-triphosphatase THEP1 (179 aa).

Residues 7–14 and 98–105 contribute to the ATP site; these read GMPGVGKT and IIIIDEIG.

This sequence belongs to the THEP1 NTPase family.

It catalyses the reaction a ribonucleoside 5'-triphosphate + H2O = a ribonucleoside 5'-diphosphate + phosphate + H(+). Its function is as follows. Has nucleotide phosphatase activity towards ATP, GTP, CTP, TTP and UTP. May hydrolyze nucleoside diphosphates with lower efficiency. This is Nucleoside-triphosphatase THEP1 from Pyrococcus abyssi (strain GE5 / Orsay).